The chain runs to 331 residues: Glyceraldehyde-3-phosphate dehydrogenase (331 aa).

NAD(+) contacts are provided by residues 11 to 12 (RI), Asp-33, and Arg-78. D-glyceraldehyde 3-phosphate-binding positions include 148 to 150 (SCT), Thr-179, 208 to 209 (TG), and Arg-231. Cys-149 serves as the catalytic Nucleophile. Asn-313 contributes to the NAD(+) binding site.

This sequence belongs to the glyceraldehyde-3-phosphate dehydrogenase family. In terms of assembly, homotetramer.

It localises to the cytoplasm. The enzyme catalyses D-glyceraldehyde 3-phosphate + phosphate + NAD(+) = (2R)-3-phospho-glyceroyl phosphate + NADH + H(+). It functions in the pathway carbohydrate degradation; glycolysis; pyruvate from D-glyceraldehyde 3-phosphate: step 1/5. This Eremothecium gossypii (strain ATCC 10895 / CBS 109.51 / FGSC 9923 / NRRL Y-1056) (Yeast) protein is Glyceraldehyde-3-phosphate dehydrogenase (GPD).